A 154-amino-acid polypeptide reads, in one-letter code: 6,7-dimethyl-8-ribityllumazine synthase (154 aa).

5-amino-6-(D-ribitylamino)uracil contacts are provided by residues Phe22, 56–58 (AFE), and 80–82 (AVI). 85 to 86 (AT) contacts (2S)-2-hydroxy-3-oxobutyl phosphate. His88 acts as the Proton donor in catalysis. 5-amino-6-(D-ribitylamino)uracil is bound at residue Phe113. Residue Arg127 coordinates (2S)-2-hydroxy-3-oxobutyl phosphate.

This sequence belongs to the DMRL synthase family. As to quaternary structure, forms an icosahedral capsid composed of 60 subunits, arranged as a dodecamer of pentamers.

The enzyme catalyses (2S)-2-hydroxy-3-oxobutyl phosphate + 5-amino-6-(D-ribitylamino)uracil = 6,7-dimethyl-8-(1-D-ribityl)lumazine + phosphate + 2 H2O + H(+). It participates in cofactor biosynthesis; riboflavin biosynthesis; riboflavin from 2-hydroxy-3-oxobutyl phosphate and 5-amino-6-(D-ribitylamino)uracil: step 1/2. Functionally, catalyzes the formation of 6,7-dimethyl-8-ribityllumazine by condensation of 5-amino-6-(D-ribitylamino)uracil with 3,4-dihydroxy-2-butanone 4-phosphate. This is the penultimate step in the biosynthesis of riboflavin. The sequence is that of 6,7-dimethyl-8-ribityllumazine synthase from Geobacillus thermodenitrificans (strain NG80-2).